The following is a 596-amino-acid chain: MAKEIVLGIDLGTTNSVVSIVEGKNPTVLENPNGKRTTPSVVAFKNGEIIVGDAAKRQVETNPDTIISIKRLMGTNKTVKANNKEYKPEEISAMILSYMKDYAEKKLGQKVSKAVITVPAYFDNAEREATKNAGRIAGLEVLRIINEPTAAALAFGLDKNKAMKVLVYDLGGGTFDVSVLDLEDGTFEVLSTSGDNHLGGDDWDNEIVKWLTKEIKTKYSYDVSKDKYALARLKENAEKAKIDLSNQSVVQINIPFLAMSANGPINVELSLKRSEFEAMTSHLLDRTRKPIEDALKEAKLSANDIHEVLLVGGSTRMPAVQDMVKRTLGKEPNRSINPDEVVSIGAAIQGGVLAGHIDDILLLDVTPLTLGIETLGGVATPLIPRNTTIPATKSQVFSTAADNQTEVTISVIQGERQMASDNKMLGRFNLTGIEAAPRGVPQIEVTFSIDVNGITKVSAKDMKTQKEQTITIENSSKLSEEEIQKFIKDAEANKEADAKRKEEAETIVRAESLIDQVKKALEAQGDKADAKTKEESDKLIKELQDLIDKKDIPTLKAKLEEVENMMKNFANFAQQANATKDQSSKDQEEVATVVEE.

Phosphothreonine; by autocatalysis is present on Thr-174. Positions 576–596 (ANATKDQSSKDQEEVATVVEE) are disordered.

It belongs to the heat shock protein 70 family.

In terms of biological role, acts as a chaperone. The protein is Chaperone protein DnaK of Mycoplasmopsis synoviae (strain 53) (Mycoplasma synoviae).